Here is a 413-residue protein sequence, read N- to C-terminus: Ribulose bisphosphate carboxylase large chain (413 aa).

Residues asparagine 100 and threonine 150 each coordinate substrate. Residue lysine 152 is the Proton acceptor of the active site. Lysine 154 is a substrate binding site. The Mg(2+) site is built by lysine 178, aspartate 180, and glutamate 181. Position 178 is an N6-carboxylysine (lysine 178). Histidine 271 (proton acceptor) is an active-site residue. Residues arginine 272, histidine 304, and serine 356 each contribute to the substrate site.

The protein belongs to the RuBisCO large chain family. Type I subfamily. As to quaternary structure, heterohexadecamer of 8 large chains and 8 small chains; disulfide-linked. The disulfide link is formed within the large subunit homodimers. The cofactor is Mg(2+). Post-translationally, the disulfide bond which can form in the large chain dimeric partners within the hexadecamer appears to be associated with oxidative stress and protein turnover.

It localises to the plastid. The protein localises to the chloroplast. It catalyses the reaction 2 (2R)-3-phosphoglycerate + 2 H(+) = D-ribulose 1,5-bisphosphate + CO2 + H2O. It carries out the reaction D-ribulose 1,5-bisphosphate + O2 = 2-phosphoglycolate + (2R)-3-phosphoglycerate + 2 H(+). In terms of biological role, ruBisCO catalyzes two reactions: the carboxylation of D-ribulose 1,5-bisphosphate, the primary event in carbon dioxide fixation, as well as the oxidative fragmentation of the pentose substrate in the photorespiration process. Both reactions occur simultaneously and in competition at the same active site. In Adiantum pedatum (Northern maidenhair fern), this protein is Ribulose bisphosphate carboxylase large chain (rbcL).